The chain runs to 393 residues: Formate-dependent phosphoribosylglycinamide formyltransferase (393 aa).

N(1)-(5-phospho-beta-D-ribosyl)glycinamide is bound by residues 22–23 (EL) and glutamate 82. ATP-binding positions include arginine 114, lysine 155, 160–165 (SSGKGQ), 195–198 (EGFI), and glutamate 203. An ATP-grasp domain is found at 119–308 (RLAAEELDLP…QFALHARAIL (190 aa)). Mg(2+)-binding residues include glutamate 267 and glutamate 279. Residues aspartate 286, lysine 356, and 363 to 364 (RR) contribute to the N(1)-(5-phospho-beta-D-ribosyl)glycinamide site.

The protein belongs to the PurK/PurT family. In terms of assembly, homodimer.

The enzyme catalyses N(1)-(5-phospho-beta-D-ribosyl)glycinamide + formate + ATP = N(2)-formyl-N(1)-(5-phospho-beta-D-ribosyl)glycinamide + ADP + phosphate + H(+). It participates in purine metabolism; IMP biosynthesis via de novo pathway; N(2)-formyl-N(1)-(5-phospho-D-ribosyl)glycinamide from N(1)-(5-phospho-D-ribosyl)glycinamide (formate route): step 1/1. Functionally, involved in the de novo purine biosynthesis. Catalyzes the transfer of formate to 5-phospho-ribosyl-glycinamide (GAR), producing 5-phospho-ribosyl-N-formylglycinamide (FGAR). Formate is provided by PurU via hydrolysis of 10-formyl-tetrahydrofolate. This chain is Formate-dependent phosphoribosylglycinamide formyltransferase, found in Pseudomonas putida (strain GB-1).